A 529-amino-acid polypeptide reads, in one-letter code: Bifunctional purine biosynthesis protein PurH (529 aa).

Residues 1–148 enclose the MGS-like domain; the sequence is MQQRRPVRRA…KNHKDVAIVV (148 aa).

Belongs to the PurH family.

It carries out the reaction (6R)-10-formyltetrahydrofolate + 5-amino-1-(5-phospho-beta-D-ribosyl)imidazole-4-carboxamide = 5-formamido-1-(5-phospho-D-ribosyl)imidazole-4-carboxamide + (6S)-5,6,7,8-tetrahydrofolate. It catalyses the reaction IMP + H2O = 5-formamido-1-(5-phospho-D-ribosyl)imidazole-4-carboxamide. It participates in purine metabolism; IMP biosynthesis via de novo pathway; 5-formamido-1-(5-phospho-D-ribosyl)imidazole-4-carboxamide from 5-amino-1-(5-phospho-D-ribosyl)imidazole-4-carboxamide (10-formyl THF route): step 1/1. It functions in the pathway purine metabolism; IMP biosynthesis via de novo pathway; IMP from 5-formamido-1-(5-phospho-D-ribosyl)imidazole-4-carboxamide: step 1/1. The chain is Bifunctional purine biosynthesis protein PurH from Salmonella typhi.